A 320-amino-acid chain; its full sequence is MRQTKTGILLANLGTPDAPTPEAVKRYLKQFLSDRRVVDTSRLLWWPLLRGVILPLRSPRVAKLYASVWMEGGSPLMVYSRQQQQALAQRLPETPVALGMSYGSPSLESAVDELLAEHVDHIVVLPLYPQYSCSTVGAVWDELARILARKRSIPGISFIRDYADNHDYINALANSVRASFAKHGEPDLLLLSYHGIPQRYADEGDDYPQRCRTTTRELASALEMAPEKVMMTFQSRFGREPWLMPYTDETLKMLGEKGVGHIQVMCPGFAADCLETLEEIAEQNREVFLGAGGKKYEYIPALNATSEHIEMMANLVAAYR.

The Fe cation site is built by histidine 194 and glutamate 275.

The protein belongs to the ferrochelatase family. In terms of assembly, monomer.

It localises to the cytoplasm. It catalyses the reaction heme b + 2 H(+) = protoporphyrin IX + Fe(2+). It participates in porphyrin-containing compound metabolism; protoheme biosynthesis; protoheme from protoporphyrin-IX: step 1/1. In terms of biological role, catalyzes the ferrous insertion into protoporphyrin IX. In Escherichia coli O127:H6 (strain E2348/69 / EPEC), this protein is Ferrochelatase.